Consider the following 230-residue polypeptide: Phosphoglycolate phosphatase (230 aa).

The active-site Nucleophile is the D9. The Mg(2+) site is built by D9, D11, and D175.

It belongs to the HAD-like hydrolase superfamily. CbbY/CbbZ/Gph/YieH family. Requires Mg(2+) as cofactor.

The enzyme catalyses 2-phosphoglycolate + H2O = glycolate + phosphate. It participates in organic acid metabolism; glycolate biosynthesis; glycolate from 2-phosphoglycolate: step 1/1. Its function is as follows. Specifically catalyzes the dephosphorylation of 2-phosphoglycolate. Is involved in the dissimilation of the intracellular 2-phosphoglycolate formed during the DNA repair of 3'-phosphoglycolate ends, a major class of DNA lesions induced by oxidative stress. This is Phosphoglycolate phosphatase from Psychrobacter arcticus (strain DSM 17307 / VKM B-2377 / 273-4).